Here is a 41-residue protein sequence, read N- to C-terminus: Large ribosomal subunit protein bL36 (41 aa).

Belongs to the bacterial ribosomal protein bL36 family.

The protein is Large ribosomal subunit protein bL36 of Ruegeria pomeroyi (strain ATCC 700808 / DSM 15171 / DSS-3) (Silicibacter pomeroyi).